A 282-amino-acid polypeptide reads, in one-letter code: ATP phosphoribosyltransferase (282 aa).

It belongs to the ATP phosphoribosyltransferase family. Long subfamily. Mg(2+) serves as cofactor.

It is found in the cytoplasm. The catalysed reaction is 1-(5-phospho-beta-D-ribosyl)-ATP + diphosphate = 5-phospho-alpha-D-ribose 1-diphosphate + ATP. Its pathway is amino-acid biosynthesis; L-histidine biosynthesis; L-histidine from 5-phospho-alpha-D-ribose 1-diphosphate: step 1/9. Its activity is regulated as follows. Feedback inhibited by histidine. Its function is as follows. Catalyzes the condensation of ATP and 5-phosphoribose 1-diphosphate to form N'-(5'-phosphoribosyl)-ATP (PR-ATP). Has a crucial role in the pathway because the rate of histidine biosynthesis seems to be controlled primarily by regulation of HisG enzymatic activity. This is ATP phosphoribosyltransferase from Halobacterium salinarum (strain ATCC 29341 / DSM 671 / R1).